A 201-amino-acid chain; its full sequence is Thymidylate kinase (201 aa).

Residue 7-14 coordinates ATP; that stretch reads GGEGSGKT.

It belongs to the thymidylate kinase family.

It catalyses the reaction dTMP + ATP = dTDP + ADP. Functionally, phosphorylation of dTMP to form dTDP in both de novo and salvage pathways of dTTP synthesis. This Acholeplasma laidlawii (strain PG-8A) protein is Thymidylate kinase.